Consider the following 366-residue polypeptide: ABI gene family member 3 (366 aa).

The stretch at 33 to 61 (CEDNYVQATDKRKALEETMAFTTQALASV) forms a coiled coil. The tract at residues 161–195 (SRTGTLSRKSIKAPATPASATLGRPPRIPEPVHLP) is disordered. S213 and S216 each carry phosphoserine. The tract at residues 215 to 302 (GSAEGVGGAP…PPPGFGPDEP (88 aa)) is disordered. Residues 232-248 (PPAPPLPSSLDPPPPPA) show a composition bias toward pro residues. The SH3 domain maps to 308-366 (SYLEKVVTLYPYTSQKDNELSFSEGTVICVTRRYSDGWCEGVSSEGTGFFPGNYVEPSC). S342 carries the post-translational modification Phosphoserine.

This sequence belongs to the ABI family. May interact with PAK1 and PAK2. Probably interacts with TARSH. In terms of tissue distribution, expressed in heart, lung, liver, pancreas, kidney, placenta and at low levels in brain and skeletal muscle.

The protein resides in the cytoplasm. In terms of biological role, may inhibit tumor metastasis. In vitro, reduces cell motility. The sequence is that of ABI gene family member 3 (ABI3) from Homo sapiens (Human).